Reading from the N-terminus, the 461-residue chain is tRNA-splicing endonuclease subunit Sen2 (461 aa).

Disordered regions lie at residues 140 to 176 (GAEQ…TSSP) and 190 to 210 (GDPA…DVKE). The span at 144-176 (TGDSCDTVCPNTENTELSGQSSTDTGNIATSSP) shows a compositional bias: polar residues. A compositionally biased stretch (basic and acidic residues) spans 201-210 (KEQEPADVKE). Active-site residues include Y365, H373, and K412.

This sequence belongs to the tRNA-intron endonuclease family. As to quaternary structure, tRNA splicing endonuclease is a heterotetramer composed of SEN2, SEN15, SEN34/LENG5 and SEN54.

It localises to the nucleus. It catalyses the reaction pretRNA = a 3'-half-tRNA molecule with a 5'-OH end + a 5'-half-tRNA molecule with a 2',3'-cyclic phosphate end + an intron with a 2',3'-cyclic phosphate and a 5'-hydroxyl terminus.. Its function is as follows. Constitutes one of the two catalytic subunit of the tRNA-splicing endonuclease complex, a complex responsible for identification and cleavage of the splice sites in pre-tRNA. It cleaves pre-tRNA at the 5'- and 3'-splice sites to release the intron. The products are an intron and two tRNA half-molecules bearing 2',3'-cyclic phosphate and 5'-OH termini. There are no conserved sequences at the splice sites, but the intron is invariably located at the same site in the gene, placing the splice sites an invariant distance from the constant structural features of the tRNA body. Probably carries the active site for 5'-splice site cleavage. The tRNA splicing endonuclease is also involved in mRNA processing via its association with pre-mRNA 3'-end processing factors, establishing a link between pre-tRNA splicing and pre-mRNA 3'-end formation, suggesting that the endonuclease subunits function in multiple RNA-processing events. In Gallus gallus (Chicken), this protein is tRNA-splicing endonuclease subunit Sen2 (TSEN2).